We begin with the raw amino-acid sequence, 305 residues long: Heat stress transcription factor B-4d (305 aa).

The hydrophobic repeat HR-A/B stretch occupies residues 201 to 230 (LRRRNSLLLSELAHMRKLYNDIIYFLQNHV). Residues 286–289 (KKRR) carry the Nuclear localization signal motif. The interval 286–305 (KKRRVQLVQEDEGDEQGSEG) is disordered. Over residues 294–305 (QEDEGDEQGSEG) the composition is skewed to acidic residues.

This sequence belongs to the HSF family. Class B subfamily. As to quaternary structure, homotrimer. In terms of processing, exhibits temperature-dependent phosphorylation.

It is found in the nucleus. In terms of biological role, transcriptional regulator that specifically binds DNA of heat shock promoter elements (HSE). The polypeptide is Heat stress transcription factor B-4d (HSFB4D) (Oryza sativa subsp. japonica (Rice)).